Consider the following 355-residue polypeptide: Protein RecA (355 aa).

Position 66–73 (66–73 (GPESSGKT)) interacts with ATP. The disordered stretch occupies residues 331 to 355 (DVPEEDLPTTEDEQINILPDDSTEE). A compositionally biased stretch (acidic residues) spans 332 to 344 (VPEEDLPTTEDEQ).

This sequence belongs to the RecA family.

The protein resides in the cytoplasm. Functionally, can catalyze the hydrolysis of ATP in the presence of single-stranded DNA, the ATP-dependent uptake of single-stranded DNA by duplex DNA, and the ATP-dependent hybridization of homologous single-stranded DNAs. It interacts with LexA causing its activation and leading to its autocatalytic cleavage. The protein is Protein RecA of Latilactobacillus sakei subsp. sakei (strain 23K) (Lactobacillus sakei subsp. sakei).